Reading from the N-terminus, the 215-residue chain is Uridine kinase (215 aa).

Position 16 to 23 (16 to 23 (GASASGKS)) interacts with ATP.

It belongs to the uridine kinase family.

It is found in the cytoplasm. It catalyses the reaction uridine + ATP = UMP + ADP + H(+). The catalysed reaction is cytidine + ATP = CMP + ADP + H(+). The protein operates within pyrimidine metabolism; CTP biosynthesis via salvage pathway; CTP from cytidine: step 1/3. It participates in pyrimidine metabolism; UMP biosynthesis via salvage pathway; UMP from uridine: step 1/1. The protein is Uridine kinase of Aliivibrio fischeri (strain ATCC 700601 / ES114) (Vibrio fischeri).